Here is a 564-residue protein sequence, read N- to C-terminus: Beta-hexosaminidase subunit B2 (564 aa).

The signal sequence occupies residues 1-19; sequence MKLKFIFLILFFIIGNSIG. 4 N-linked (GlcNAc...) asparagine glycosylation sites follow: Asn-43, Asn-84, Asn-303, and Asn-347. The active-site Proton donor is the Glu-357. Residues Asn-364, Asn-377, Asn-439, Asn-524, and Asn-551 are each glycosylated (N-linked (GlcNAc...) asparagine).

Belongs to the glycosyl hydrolase 20 family.

It localises to the lysosome. It catalyses the reaction Hydrolysis of terminal non-reducing N-acetyl-D-hexosamine residues in N-acetyl-beta-D-hexosaminides.. Functionally, responsible for the degradation of GM2 gangliosides, and a variety of other molecules containing terminal N-acetyl hexosamines. This chain is Beta-hexosaminidase subunit B2 (hexb2), found in Dictyostelium discoideum (Social amoeba).